The primary structure comprises 184 residues: Helix-loop-helix protein ngn-1 (184 aa).

The tract at residues 1–55 (MYHHSPFYPHHLQTGEQDLDMERENDMDQNSKNSTQKPVKREKRRYRCRKRSPAT) is disordered. Residues 28 to 37 (DQNSKNSTQK) are compositionally biased toward polar residues. A compositionally biased stretch (basic residues) spans 38–52 (PVKREKRRYRCRKRS). Residues 62 to 75 (VRRDKANARERRRM) are basic motif. The bHLH domain occupies 62 to 114 (VRRDKANARERRRMNSLNDALEHLRGILPALPDEPKMTKIETLRKAQEYIASL). The helix-loop-helix motif stretch occupies residues 76 to 114 (NSLNDALEHLRGILPALPDEPKMTKIETLRKAQEYIASL). A disordered region spans residues 164–184 (SNPPSQMYYHHHHQSPSFPHH). Over residues 172 to 184 (YHHHHQSPSFPHH) the composition is skewed to basic residues.

In terms of assembly, interacts with hlh-2; the interaction is direct.

It localises to the nucleus. In terms of biological role, acts as a transcriptional regulator. Regulates expression of various genes, including homeobox protein unc-42 and helix-loop-helix protein hlh-34. Required for embryonic viability, neuromuscular development, organization of the nerve ring and neuronal cell body location. Regulates AIY neuron axon morphology and cell fate. Plays a role in cell autonomously establishing a neuronal left-right asymmetry. Involved in regulating glial specification. This chain is Helix-loop-helix protein ngn-1, found in Caenorhabditis elegans.